We begin with the raw amino-acid sequence, 445 residues long: Glycine--tRNA ligase (445 aa).

R97 and E145 together coordinate substrate. ATP contacts are provided by residues 177–179 (RNE), 187–192 (FRTCEF), 262–263 (EV), and 308–311 (GLTR). Substrate is bound at residue 192-196 (FEQME). 304–308 (ETSAG) lines the substrate pocket.

This sequence belongs to the class-II aminoacyl-tRNA synthetase family. Homodimer.

The protein localises to the cytoplasm. The enzyme catalyses tRNA(Gly) + glycine + ATP = glycyl-tRNA(Gly) + AMP + diphosphate. Catalyzes the attachment of glycine to tRNA(Gly). This Borrelia garinii subsp. bavariensis (strain ATCC BAA-2496 / DSM 23469 / PBi) (Borreliella bavariensis) protein is Glycine--tRNA ligase.